The primary structure comprises 37 residues: Putative preoptic regulatory factor 1 (37 aa).

2 propeptides span residues 1–7 (MPYSLQP) and 18–37 (FPLC…PPDL).

It belongs to the GnRH family. In terms of tissue distribution, preoptic area and testis.

It is found in the secreted. Functionally, precursor for a gonadotropin regulatory hormone (GNRH) related decapeptide. This Rattus norvegicus (Rat) protein is Putative preoptic regulatory factor 1 (Porf1).